A 155-amino-acid chain; its full sequence is Small ribosomal subunit protein uS7c (155 aa).

This sequence belongs to the universal ribosomal protein uS7 family. In terms of assembly, part of the 30S ribosomal subunit.

It is found in the plastid. Its subcellular location is the chloroplast. One of the primary rRNA binding proteins, it binds directly to 16S rRNA where it nucleates assembly of the head domain of the 30S subunit. The protein is Small ribosomal subunit protein uS7c (rps7) of Butomus umbellatus (Flowering rush).